Reading from the N-terminus, the 295-residue chain is 2-methylisocitrate lyase (295 aa).

45 to 47 (SGG) lines the substrate pocket. Residues aspartate 85 and aspartate 87 each contribute to the Mg(2+) site. Residues 123–124 (CG), arginine 158, glutamate 188, 210–212 (NIT), arginine 241, and arginine 270 each bind substrate.

It belongs to the isocitrate lyase/PEP mutase superfamily. Methylisocitrate lyase family. Homotetramer; dimer of dimers. Mg(2+) is required as a cofactor.

It catalyses the reaction (2S,3R)-3-hydroxybutane-1,2,3-tricarboxylate = pyruvate + succinate. It participates in organic acid metabolism; propanoate degradation. Its function is as follows. Involved in the catabolism of short chain fatty acids (SCFA) via the 2-methylcitrate cycle I (propionate degradation route). Catalyzes the thermodynamically favored C-C bond cleavage of (2R,3S)-2-methylisocitrate to yield pyruvate and succinate via an alpha-carboxy-carbanion intermediate. The polypeptide is 2-methylisocitrate lyase (Salmonella typhimurium (strain LT2 / SGSC1412 / ATCC 700720)).